Here is a 113-residue protein sequence, read N- to C-terminus: Large ribosomal subunit protein uL22 (113 aa).

Belongs to the universal ribosomal protein uL22 family. Part of the 50S ribosomal subunit.

This protein binds specifically to 23S rRNA; its binding is stimulated by other ribosomal proteins, e.g. L4, L17, and L20. It is important during the early stages of 50S assembly. It makes multiple contacts with different domains of the 23S rRNA in the assembled 50S subunit and ribosome. Functionally, the globular domain of the protein is located near the polypeptide exit tunnel on the outside of the subunit, while an extended beta-hairpin is found that lines the wall of the exit tunnel in the center of the 70S ribosome. This is Large ribosomal subunit protein uL22 from Geobacillus stearothermophilus (Bacillus stearothermophilus).